Reading from the N-terminus, the 379-residue chain is Cytochrome b (379 aa).

Transmembrane regions (helical) follow at residues 33-53, 77-98, 113-133, and 178-198; these read FGSLLGMCLMIQILTGLFLAM, WLIRYLHANGASMFFICLFIHV, WNIGIILFFTTMATAFVGYVL, and FFAFHFILPFIITAFVLVHLL. Positions 83 and 97 each coordinate heme b. Heme b contacts are provided by His182 and His196. Position 201 (His201) interacts with a ubiquinone. 4 helical membrane-spanning segments follow: residues 226–246, 288–308, 320–340, and 347–367; these read IKDLLGILFLLMALMILALFF, LGGVLALLLSILILMAFPLLN, ITQIIYWILIANLLVLTWIGG, and FTMIGQIASITYFTIILILMP.

The protein belongs to the cytochrome b family. The cytochrome bc1 complex contains 11 subunits: 3 respiratory subunits (MT-CYB, CYC1 and UQCRFS1), 2 core proteins (UQCRC1 and UQCRC2) and 6 low-molecular weight proteins (UQCRH/QCR6, UQCRB/QCR7, UQCRQ/QCR8, UQCR10/QCR9, UQCR11/QCR10 and a cleavage product of UQCRFS1). This cytochrome bc1 complex then forms a dimer. Heme b serves as cofactor.

It is found in the mitochondrion inner membrane. Functionally, component of the ubiquinol-cytochrome c reductase complex (complex III or cytochrome b-c1 complex) that is part of the mitochondrial respiratory chain. The b-c1 complex mediates electron transfer from ubiquinol to cytochrome c. Contributes to the generation of a proton gradient across the mitochondrial membrane that is then used for ATP synthesis. The sequence is that of Cytochrome b (MT-CYB) from Akodon dayi (Day's grass mouse).